We begin with the raw amino-acid sequence, 445 residues long: 26S proteasome regulatory subunit RPN5 (445 aa).

Residue Ser2 is modified to N-acetylserine. One can recognise a PCI domain in the interval 233-407; that stretch reads EYLEVAQYLQ…KIVNFEKPKN (175 aa).

Belongs to the proteasome subunit p55 family. N-acetylated by NAT1.

Its function is as follows. Acts as a regulatory subunit of the 26S proteasome which is involved in the ATP-dependent degradation of ubiquitinated proteins. This chain is 26S proteasome regulatory subunit RPN5 (RPN5), found in Saccharomyces cerevisiae (strain ATCC 204508 / S288c) (Baker's yeast).